We begin with the raw amino-acid sequence, 410 residues long: MATTNSQSHYSYADNMNMYNMYHPHSLPPTYYDNSGSNAYYQNTSNYQGYYPQESYSESCYYYNNQEQVTTQTVPPVQPTTPPPKATKRKAEDDAASIIAAVEERPSTLRALLTNPVKKLKYTPDYFYTTVEQVKKAPAVSTKVTASPAPSYDQEYVTVPTPSASEDVDYLDVYSPQSQTQKLKNGDFATPPPTTPTSLPPLEGISTPPQSPGEKSSSAVSQEINHRIVTAPNGAGDFNWSHIEETLASDCKDSKRTRQTYTRYQTLELEKEFHFNRYITRRRRIDIANALSLSERQIKIWFQNRRMKSKKDRTLDSSPEHCGAGYTAMLPPLEATSTATTGAPSVPVPMYHHHQTTAAYPAYSHSHSHGYGLLNDYPQQQTHQQYDAYPQQYQHQCSYQQHPQDLYHLS.

Disordered stretches follow at residues 71–93 (TQTVPPVQPTTPPPKATKRKAED), 138–157 (PAVSTKVTASPAPSYDQEYV), and 175–221 (SPQS…SAVS). A compositionally biased stretch (pro residues) spans 76 to 85 (PVQPTTPPPK). Positions 190–199 (TPPPTTPTSL) are enriched in pro residues. The homeobox DNA-binding region spans 254 to 313 (SKRTRQTYTRYQTLELEKEFHFNRYITRRRRIDIANALSLSERQIKIWFQNRRMKSKKDR).

The protein belongs to the Antp homeobox family. In terms of processing, phosphorylated at as many as 16 sites. In terms of tissue distribution, expressed early in development in a striped pattern at the blastoderm stage. Later expressed in a specific subset of neuronal precursor cells, neurons and glia in the developing CNS. Between 5 and 6 hours of development, found in the midline precursor-2 cells in a segmentally repeating pattern. Expression in many other neuronal precursors follows and reaches a second peak of abundance at 9 hours of development. Expressed in the hindgut between 11-15 hours of development.

Its subcellular location is the nucleus. Functionally, may play a role in determining neuronal identity, may be directly involved in specifying identity of individual neurons. Required during embryogenesis for the process of body segmentation. Homeotic protein, required in alternating segment primordia, it specifies the correct number of segments. The protein is Segmentation protein fushi tarazu (ftz) of Drosophila melanogaster (Fruit fly).